Consider the following 306-residue polypeptide: Epoxyqueuosine reductase (306 aa).

Catalysis depends on Asp131, which acts as the Proton donor. A 4Fe-4S ferredoxin-type domain is found at 173-205 (LDLTYDHPVTDHCGTCTACIDACPTQAIVQPYV). [4Fe-4S] cluster contacts are provided by Cys185, Cys188, Cys191, Cys195, Cys211, Cys238, Cys241, and Cys245.

This sequence belongs to the QueG family. As to quaternary structure, monomer. Cob(II)alamin is required as a cofactor. Requires [4Fe-4S] cluster as cofactor.

Its subcellular location is the cytoplasm. The enzyme catalyses epoxyqueuosine(34) in tRNA + AH2 = queuosine(34) in tRNA + A + H2O. It participates in tRNA modification; tRNA-queuosine biosynthesis. Functionally, catalyzes the conversion of epoxyqueuosine (oQ) to queuosine (Q), which is a hypermodified base found in the wobble positions of tRNA(Asp), tRNA(Asn), tRNA(His) and tRNA(Tyr). The protein is Epoxyqueuosine reductase of Cellulophaga algicola (strain DSM 14237 / IC166 / ACAM 630).